A 349-amino-acid polypeptide reads, in one-letter code: Nicotinate-nucleotide--dimethylbenzimidazole phosphoribosyltransferase (349 aa).

Residues 1 to 20 (MEFATVSPPDPGTAAAARAR) form a disordered region. Catalysis depends on E313, which acts as the Proton acceptor.

The protein belongs to the CobT family.

It catalyses the reaction 5,6-dimethylbenzimidazole + nicotinate beta-D-ribonucleotide = alpha-ribazole 5'-phosphate + nicotinate + H(+). The protein operates within nucleoside biosynthesis; alpha-ribazole biosynthesis; alpha-ribazole from 5,6-dimethylbenzimidazole: step 1/2. Catalyzes the synthesis of alpha-ribazole-5'-phosphate from nicotinate mononucleotide (NAMN) and 5,6-dimethylbenzimidazole (DMB). This Mycolicibacterium paratuberculosis (strain ATCC BAA-968 / K-10) (Mycobacterium paratuberculosis) protein is Nicotinate-nucleotide--dimethylbenzimidazole phosphoribosyltransferase.